A 339-amino-acid polypeptide reads, in one-letter code: Methyltransferase ptaI (339 aa).

Belongs to the methyltransferase superfamily.

It functions in the pathway secondary metabolite biosynthesis. Functionally, methyltransferase; part of the gene cluster that mediates the biosynthesis of pestheic acid, a diphenyl ether which is a biosynthetic precursor of the unique chloropupukeananes. The biosynthesis initiates from condensation of acetate and malonate units catalyzed by the non-reducing PKS ptaA. As the ptaA protein is TE/CLC domain-deficient, hydrolysis and Claisen cyclization of the polyketide could be catalyzed by ptaB containing a beta-lactamase domain. The ptaB protein might hydrolyze the thioester bond between the ACP of ptaA and the intermediate to release atrochrysone carboxylic acid, which is spontaneously dehydrated to form endocrocin anthrone. Endocrocin anthrone is then converted to endocrocin, catalyzed by the anthrone oxygenase ptaC. Spontaneous decarboxylation of endocrocin occurs to generate emodin. An O-methyltransferase (ptaH or ptaI) could methylate emodin to form physcion. PtaJ could then catalyze the oxidative cleavage of physcion, and rotation of the intermediate could then afford desmethylisosulochrin. PtaF, a putative NADH-dependent oxidoreductase, might also participate in the oxidative cleavage step. Desmethylisosulochrin is then transformed by another O-methyltransferase (ptaH or ptaI) to form isosulochrin. Chlorination of isosulochrin by ptaM in the cyclohexadienone B ring then produces chloroisosulochrin. PtaE is responsible for the oxidative coupling reactions of both benzophenones isosulouchrin and chloroisosulochrin to RES-1214-1 and pestheic acid respectively, regardless of chlorination. The sequence is that of Methyltransferase ptaI from Pestalotiopsis fici (strain W106-1 / CGMCC3.15140).